Reading from the N-terminus, the 748-residue chain is E3 ubiquitin-protein ligase DTX3L (748 aa).

The residue at position 2 (Ala-2) is an N-acetylalanine. Ser-9 carries the phosphoserine modification. 3 disordered regions span residues 94-117 (DLRP…PSLT), 209-238 (EQKR…PPDQ), and 528-562 (QETP…PAAS). Residues 101 to 117 (SLTQPVETPSSRPPSLT) are compositionally biased toward polar residues. Basic and acidic residues-rich tracts occupy residues 209 to 219 (EQKRKGSEQKR) and 227 to 236 (TPPDVEREPP). Ser-215 carries the phosphoserine modification. Ser-536 is modified (phosphoserine). An RING-type zinc finger spans residues 569–608 (CVICMDTISNKHVLPKCKHEFCTSCISKAMLIKPVCPVCL).

Belongs to the Deltex family. Homodimer and heterodimer. Can heterodimerize with DTX1, enhancing its ubiquitin ligase activity in vitro. Interacts (via N-terminus) with ADP ribosyltransferase PARP9/BAL1 (via PARP catalytic domain) forming a stable complex; the interaction is required to activate PARP9 but is dispensable for DTX3L catalytic activity. Forms a complex with STAT1 and PARP9 independently of IFNB1 or IFNG-mediated STAT1 'Tyr-701' phosphorylation. Found in a complex with PARP9, STAT1 and H2BC9. Found in a complex with E3 ligase ITCH and ESCRT-0 components HGS and STAM. Interacts (via C-terminus) with ITCH; the interaction is increased upon CXCL12 stimulation and inhibits ITCH catalytic activity; the interaction is direct. Interacts with HGS and STAM; the interaction brings together HGS and STAM and promotes their recruitment to early endosomes. Autoubiquitinated.

The protein localises to the cytoplasm. It localises to the nucleus. It is found in the early endosome membrane. Its subcellular location is the lysosome membrane. It carries out the reaction S-ubiquitinyl-[E2 ubiquitin-conjugating enzyme]-L-cysteine + [acceptor protein]-L-lysine = [E2 ubiquitin-conjugating enzyme]-L-cysteine + N(6)-ubiquitinyl-[acceptor protein]-L-lysine.. The protein operates within protein modification; protein ubiquitination. Binding to PARP9 enhances DTX3L catalytic activity. E3 ubiquitin-protein ligase which, in association with ADP-ribosyltransferase PARP9, plays a role in DNA damage repair and in interferon-mediated antiviral responses. Monoubiquitinates several histones, including histone H2A, H2B, H3 and H4. In response to DNA damage, mediates monoubiquitination of 'Lys-91' of histone H4 (H4K91ub1). The exact role of H4K91ub1 in DNA damage response is still unclear but it may function as a licensing signal for additional histone H4 post-translational modifications such as H4 'Lys-20' methylation (H4K20me). PARP1-dependent PARP9-DTX3L-mediated ubiquitination promotes the rapid and specific recruitment of 53BP1/TP53BP1, UIMC1/RAP80, and BRCA1 to DNA damage sites. By monoubiquitinating histone H2B H2BC9/H2BJ and thereby promoting chromatin remodeling, positively regulates STAT1-dependent interferon-stimulated gene transcription and thus STAT1-mediated control of viral replication. Independently of its catalytic activity, promotes the sorting of chemokine receptor CXCR4 from early endosome to lysosome following CXCL12 stimulation by reducing E3 ligase ITCH activity and thus ITCH-mediated ubiquitination of endosomal sorting complex required for transport ESCRT-0 components HGS and STAM. In addition, required for the recruitment of HGS and STAM to early endosomes. The sequence is that of E3 ubiquitin-protein ligase DTX3L (Dtx3l) from Mus musculus (Mouse).